The following is a 58-amino-acid chain: MLQLLKNGRWNVMTLLITISILIVLAVLLVTIWTTVKAYNVKHTIDPPQENHSDSHNQ.

The chain crosses the membrane as a helical span at residues 12-32 (VMTLLITISILIVLAVLLVTI).

Its subcellular location is the cell membrane. This is an uncharacterized protein from Bacillus subtilis (strain 168).